The following is an 80-amino-acid chain: Acyl carrier protein (80 aa).

The region spanning Glu-4–Ala-79 is the Carrier domain. At Ser-39 the chain carries O-(pantetheine 4'-phosphoryl)serine.

It belongs to the acyl carrier protein (ACP) family. In terms of processing, 4'-phosphopantetheine is transferred from CoA to a specific serine of apo-ACP by AcpS. This modification is essential for activity because fatty acids are bound in thioester linkage to the sulfhydryl of the prosthetic group.

It is found in the cytoplasm. Its pathway is lipid metabolism; fatty acid biosynthesis. Functionally, carrier of the growing fatty acid chain in fatty acid biosynthesis. This Synechococcus elongatus (strain ATCC 33912 / PCC 7942 / FACHB-805) (Anacystis nidulans R2) protein is Acyl carrier protein.